Reading from the N-terminus, the 585-residue chain is Glutamate decarboxylase 2 (585 aa).

Positions 1–25 are disordered; sequence MASPGSGFWSFGSEDGSGDPENPST. Phosphoserine occurs at positions 3, 6, 10, and 13. Residues C30 and C45 are each lipidated (S-palmitoyl cysteine). 181–183 lines the substrate pocket; sequence QLS. Residue K396 is modified to N6-(pyridoxal phosphate)lysine. R558 contacts substrate.

Belongs to the group II decarboxylase family. Homodimer. It depends on pyridoxal 5'-phosphate as a cofactor. In terms of processing, phosphorylated; which does not affect kinetic parameters or subcellular location. Post-translationally, palmitoylated; which is required for presynaptic clustering.

It localises to the cytoplasm. It is found in the cytosol. Its subcellular location is the cytoplasmic vesicle. The protein resides in the presynaptic cell membrane. The protein localises to the golgi apparatus membrane. It carries out the reaction L-glutamate + H(+) = 4-aminobutanoate + CO2. Catalyzes the production of GABA. The sequence is that of Glutamate decarboxylase 2 (GAD2) from Canis lupus familiaris (Dog).